The sequence spans 288 residues: uncharacterized protein (288 aa).

Positions 1–12 (MTEGRCAQHPDG) are enriched in basic and acidic residues. A disordered region spans residues 1-20 (MTEGRCAQHPDGLDVQDVCD).

It belongs to the class IV-like SAM-binding methyltransferase superfamily. RNA methyltransferase TrmH family.

This is an uncharacterized protein from Mycobacterium bovis (strain ATCC BAA-935 / AF2122/97).